Reading from the N-terminus, the 415-residue chain is Calreticulin (415 aa).

Residues 1–20 (MANPKSLSLFLLSLLAIASA) form the signal peptide. Asn52 is a glycosylation site (N-linked (GlcNAc...) asparagine). Cysteines 106 and 138 form a disulfide. An alpha-D-glucoside-binding residues include Tyr110, Lys112, Tyr129, and Asp136. Asn152 carries N-linked (GlcNAc...) asparagine glycosylation. A run of 7 repeats spans residues 192–203 (KQTGSLYTDWDL), 211–222 (DPEAKKPEDWDE), 228–239 (DPEDKKPEGYDD), 246–257 (DPDAKKPEDWDD), 261–271 (GEWTAPTIANP), 275–285 (GPWKPKKIKNP), and 289–299 (GKWKAPMIDNP). A 4 X approximate repeats region spans residues 192 to 257 (KQTGSLYTDW…DAKKPEDWDD (66 aa)). The segment covering 208–253 (KIKDPEAKKPEDWDEKEYIPDPEDKKPEGYDDIPKEIPDPDAKKPE) has biased composition (basic and acidic residues). Residues 208–276 (KIKDPEAKKP…TIANPEYKGP (69 aa)) form a disordered region. The tract at residues 261 to 299 (GEWTAPTIANPEYKGPWKPKKIKNPNYKGKWKAPMIDNP) is 3 X approximate repeats. Position 319 (Glu319) interacts with an alpha-D-glucoside. Basic and acidic residues predominate over residues 347-376 (ETWGKNKDAEKAAFEEAEKKKEEEESKDDP). The tract at residues 347-415 (ETWGKNKDAE…DSAEDVHDEL (69 aa)) is disordered. Composition is skewed to acidic residues over residues 377-397 (ADSD…EDDG) and 404-415 (AEDSAEDVHDEL). Positions 412–415 (HDEL) match the Prevents secretion from ER motif.

It belongs to the calreticulin family.

The protein resides in the endoplasmic reticulum lumen. Functionally, molecular calcium-binding chaperone promoting folding, oligomeric assembly and quality control in the ER via the calreticulin/calnexin cycle. This lectin may interact transiently with almost all of the monoglucosylated glycoproteins that are synthesized in the ER. The sequence is that of Calreticulin from Ricinus communis (Castor bean).